A 956-amino-acid chain; its full sequence is MSSGLWSQDKVTSPYWEERVFYLLLQECSVTDKQTQKLLKVPKGSIGQYIQDRSVGHSRIPSAKGKKNRIGLKILEQPHAVLFVDEKDVVEINEKFTELLLAITNCEERFSLFKNRNRLSKGLQIDVGCPVKVQLRSGEEKFPGVVRFRGPLLAERTVSGIFFGVELLEEGRGQGFTDGVYQGKQLFQCDEDCGVFVALDKLELIEDDDTALESDYAGPGDTMQVELPPLEINSRVSLKVGETIESGTVIFCDVLPGKESLGYFVGVDMDNPIGNWDGRFDGVQLCSFACVESTILLHINDIIPALSESVTQERRPPKLAFMSRGVGDKGSSSHNKPKATGSTSDPGNRNRSELFYTLNGSSVDSQPQSKSKNTWYIDEVAEDPAKSLTEISTDFDRSSPPLQPPPVNSLSTENRFHSLPFSLTKMPNTNGSIGHSPLSLSAQSVMEELNTAPVQESPPLAMPPGNSHGLEVGSLAEVKENPPFYGVIRWIGQPPGLNEVLAGLELEDECAGCTDGTFRGTRYFTCALKKALFVKLKSCRPDSRFASLQPVSNQIERCNSLAFGGYLSEVVEENTPPKMEKEGLEIMIGKKKGIQGHYNSCYLDSTLFCLFAFSSVLDTVLLRPKEKNDVEYYSETQELLRTEIVNPLRIYGYVCATKIMKLRKILEKVEAASGFTSEEKDPEEFLNILFHHILRVEPLLKIRSAGQKVQDCYFYQIFMEKNEKVGVPTIQQLLEWSFINSNLKFAEAPSCLIIQMPRFGKDFKLFKKIFPSLELNITDLLEDTPRQCRICGGLAMYECRECYDDPDISAGKIKQFCKTCNTQVHLHPKRLNHKYNPVSLPKDLPDWDWRHGCIPCQNMELFAVLCIETSHYVAFVKYGKDDSAWLFFDSMADRDGGQNGFNIPQVTPCPEVGEYLKMSLEDLHSLDSRRIQGCARRLLCDAYMCMYQSPTMSLYK.

Positions 106–593 (CEERFSLFKN…LEIMIGKKKG (488 aa)) are interaction with TRIP. 2 CAP-Gly domains span residues 153–198 (LAER…VFVA) and 253–286 (DVLP…VQLC). The interval 309–353 (SVTQERRPPKLAFMSRGVGDKGSSSHNKPKATGSTSDPGNRNRSE) is disordered. Over residues 330 to 349 (GSSSHNKPKATGSTSDPGNR) the composition is skewed to polar residues. A Phosphoserine modification is found at Ser-387. The disordered stretch occupies residues 392 to 411 (STDFDRSSPPLQPPPVNSLS). Positions 394-469 (DFDRSSPPLQ…LAMPPGNSHG (76 aa)) are interaction with TRAF2. Residues Ser-418 and Ser-422 each carry the phosphoserine modification. The interaction with IKBKG/NEMO stretch occupies residues 470–684 (LEVGSLAEVK…FTSEEKDPEE (215 aa)). The CAP-Gly 3 domain maps to 492–535 (GQPPGLNEVLAGLELEDECAGCTDGTFRGTRYFTCALKKALFVK). Positions 592 to 950 (KGIQGHYNSC…DAYMCMYQSP (359 aa)) constitute a USP domain. Cys-601 functions as the Nucleophile in the catalytic mechanism. Residues 781 to 833 (LEDTPRQCRICGGLAMYECRECYDDPDISAGKIKQFCKTCNTQVHLHPKRLNH) form a B-box region. Residues Cys-788, Cys-791, Cys-799, Cys-802, Cys-817, Cys-820, His-825, and His-833 each contribute to the Zn(2+) site. His-871 (proton acceptor) is an active-site residue.

Belongs to the peptidase C19 family. Interacts (via CAP-Gly domain) with IKBKG/NEMO (via proline-rich C-terminal region). Interacts with TRAF2 and TRIP. Interacts with PLK1, DVL1, DVL3, MAVS, TBK1, IKKE and RIGI. Interacts (via CAP-Gly domain) with microtubules. Interacts with HDAC6 and BCL3. Interacts with MAP3K7. Identified in a complex with TRAF6 and SQSTM1. Interacts with OPTN and SQSTM1. Interacts with CEP350. Interacts with RNF31; the interaction is indirect and is mediated via SPATA2. Interacts with SPATA2 (via the PUB domain); the interaction is direct and recruits CYLD to the LUBAC complex, thereby regulating TNF-alpha-induced necroptosis. Phosphorylated on several serine residues by IKKA and/or IKKB in response to immune stimuli. Phosphorylation requires IKBKG. Phosphorylation abolishes TRAF2 deubiquitination, interferes with the activation of Jun kinases, and strongly reduces CD40-dependent gene activation by NF-kappa-B. Post-translationally, ubiquitinated. Polyubiquitinated in hepatocytes treated with palmitic acid. Ubiquitination is mediated by E3 ligase TRIM47 and leads to proteasomal degradation.

It is found in the cytoplasm. Its subcellular location is the perinuclear region. The protein localises to the cytoskeleton. It localises to the cell membrane. The protein resides in the microtubule organizing center. It is found in the centrosome. Its subcellular location is the spindle. The protein localises to the cilium basal body. It catalyses the reaction Thiol-dependent hydrolysis of ester, thioester, amide, peptide and isopeptide bonds formed by the C-terminal Gly of ubiquitin (a 76-residue protein attached to proteins as an intracellular targeting signal).. Deubiquitinase that specifically cleaves 'Lys-63'- and linear 'Met-1'-linked polyubiquitin chains and is involved in NF-kappa-B activation and TNF-alpha-induced necroptosis. Negatively regulates NF-kappa-B activation by deubiquitinating upstream signaling factors. Contributes to the regulation of cell survival, proliferation and differentiation via its effects on NF-kappa-B activation. Negative regulator of Wnt signaling. Inhibits HDAC6 and thereby promotes acetylation of alpha-tubulin and stabilization of microtubules. Plays a role in the regulation of microtubule dynamics, and thereby contributes to the regulation of cell proliferation, cell polarization, cell migration, and angiogenesis. Required for normal cell cycle progress and normal cytokinesis. Inhibits nuclear translocation of NF-kappa-B. Plays a role in the regulation of inflammation and the innate immune response, via its effects on NF-kappa-B activation. Dispensable for the maturation of intrathymic natural killer cells, but required for the continued survival of immature natural killer cells. Negatively regulates TNFRSF11A signaling and osteoclastogenesis. Involved in the regulation of ciliogenesis, allowing ciliary basal bodies to migrate and dock to the plasma membrane; this process does not depend on NF-kappa-B activation. Ability to remove linear ('Met-1'-linked) polyubiquitin chains regulates innate immunity and TNF-alpha-induced necroptosis: recruited to the LUBAC complex via interaction with SPATA2 and restricts linear polyubiquitin formation on target proteins. Regulates innate immunity by restricting linear polyubiquitin formation on RIPK2 in response to NOD2 stimulation. Involved in TNF-alpha-induced necroptosis by removing linear ('Met-1'-linked) polyubiquitin chains from RIPK1, thereby regulating the kinase activity of RIPK1. Negatively regulates intestinal inflammation by removing 'Lys-63' linked polyubiquitin chain of NLRP6, thereby reducing the interaction between NLRP6 and PYCARD/ASC and formation of the NLRP6 inflammasome. Does not catalyze deubiquitination of heterotypic 'Lys-63'-/'Lys-48'-linked branched ubiquitin chains. Removes 'Lys-63' linked polyubiquitin chain of MAP3K7, which inhibits phosphorylation and blocks downstream activation of the JNK-p38 kinase cascades. Also removes 'Lys-63'-linked polyubiquitin chains of MAP3K1 and MA3P3K3, which inhibit their interaction with MAP2K1 and MAP2K2. This Pongo abelii (Sumatran orangutan) protein is Ubiquitin carboxyl-terminal hydrolase CYLD (CYLD).